A 619-amino-acid chain; its full sequence is MRILLIYMLGLSGIACASSIKEIVKESREKLEKGLGYKLSSSEIRMLRRLFEKNAGLETRVVIPVILHQSKVVVSPGTRYRDIEEGERKYVEKVIKLLPEVAWRSITHIYALANNDWAVDLMYDVFDKASSWRSDTVALYKGTEKKYGMKFTDLVNGIFEQNNCILKEFGRLLADRVEILIQELPGSLDDVEKKREEEVLRKIKEYGRRLCTKEKQDEIIKAQRIMCNVCEYIWKREEDRKSFIMEVYSTYLKLREMESNVDEIEEPLIYFVDHRGLINACDKYKSMDIMAELILQLFLQGKNIDDKSIKSAVRSVRERKRLEEMREMEERKRREEERAKNEEELLRMVEREKREESKGRGKKKGGKRGAGEAKEESKEEDRKEEEGVEVEEEESAEVPLVETVVGGARRKKKGSREKKMGEEHHYKVHSRVLRWKKDAEKIKRELDKGSEERWKGKSVEEIKEQKKVHDIVEVSELLRDKEKCDRFFVRTGKYMKGGSERWKMVANGILEEGGEKKVGKVEVGLFKGGRGESVVYHLMFRPTETERTGMVGGSSFGEGDDVDEIKKEKSSDMSGFRYPSGVRCEMTSNGNEFRIEYRNRKNTSEVLRTLTILRIPEIL.

2 stretches are compositionally biased toward basic and acidic residues: residues 350-359 (EREKREESKG) and 369-385 (GAGE…RKEE). Positions 350–425 (EREKREESKG…REKKMGEEHH (76 aa)) are disordered. The segment covering 386-396 (EGVEVEEEESA) has biased composition (acidic residues).

This sequence belongs to the UPF0329 family.

The polypeptide is UPF0329 protein ECU08_2070 (Encephalitozoon cuniculi (strain GB-M1) (Microsporidian parasite)).